We begin with the raw amino-acid sequence, 542 residues long: NAD-dependent deacetylase sir2D (542 aa).

Disordered stretches follow at residues 1 to 37 (MNKR…NTPL) and 136 to 160 (ETST…TTTT). Positions 8–25 (NNELNEIQNNQNKNNNNK) are enriched in low complexity. The stretch at 165-193 (NETILLDILNNNKDEVDDEIQRIGNNVGN) forms a coiled coil. The Deacetylase sirtuin-type domain maps to 283-542 (ATLDLSTFEK…VQDLLNKVKW (260 aa)). The active-site Proton acceptor is His411. Residues Cys419, Cys422, Cys443, and Cys446 each contribute to the Zn(2+) site.

The protein belongs to the sirtuin family. The cofactor is Zn(2+).

The enzyme catalyses N(6)-acetyl-L-lysyl-[protein] + NAD(+) + H2O = 2''-O-acetyl-ADP-D-ribose + nicotinamide + L-lysyl-[protein]. NAD-dependent deacetylase, which plays an important role in the regulation of transcriptional repression. The chain is NAD-dependent deacetylase sir2D (sir2D) from Dictyostelium discoideum (Social amoeba).